The sequence spans 123 residues: Ribosome-binding factor A (123 aa).

This sequence belongs to the RbfA family. Monomer. Binds 30S ribosomal subunits, but not 50S ribosomal subunits or 70S ribosomes.

Its subcellular location is the cytoplasm. Its function is as follows. One of several proteins that assist in the late maturation steps of the functional core of the 30S ribosomal subunit. Associates with free 30S ribosomal subunits (but not with 30S subunits that are part of 70S ribosomes or polysomes). Required for efficient processing of 16S rRNA. May interact with the 5'-terminal helix region of 16S rRNA. The chain is Ribosome-binding factor A from Acetivibrio thermocellus (strain ATCC 27405 / DSM 1237 / JCM 9322 / NBRC 103400 / NCIMB 10682 / NRRL B-4536 / VPI 7372) (Clostridium thermocellum).